The sequence spans 125 residues: Cytochrome c oxidase assembly factor 6 homolog (125 aa).

G2 is modified (N-acetylalanine). One can recognise a CHCH domain in the interval 55–98; that stretch reads RQVCWGARDEYWKCLDENLEDASQCKKLRSSFESSCPQQWIKYF. Positions 58-68 match the Cx9C motif motif; that stretch reads CWGARDEYWKC. Cystine bridges form between C58–C90 and C68–C79. Positions 79–90 match the Cx10C motif motif; sequence CKKLRSSFESSC.

Belongs to the cytochrome c oxidase subunit 6B family. As to quaternary structure, interacts with COA1. Found in a complex with TMEM177, COX20, MT-CO2/COX2, COX18, SCO1 and SCO2. Interacts with MT-CO2/COX2 and SCO2. Interacts with SCO1. Interacts with COX20 in a MT-CO2/COX2- and COX18-dependent manner. Interacts with COX16.

The protein localises to the mitochondrion intermembrane space. Involved in the maturation of the mitochondrial respiratory chain complex IV subunit MT-CO2/COX2. Thereby, may regulate early steps of complex IV assembly. Mitochondrial respiratory chain complex IV or cytochrome c oxidase is the component of the respiratory chain that catalyzes the transfer of electrons from intermembrane space cytochrome c to molecular oxygen in the matrix and as a consequence contributes to the proton gradient involved in mitochondrial ATP synthesis. May also be required for efficient formation of respiratory supercomplexes comprised of complexes III and IV. The protein is Cytochrome c oxidase assembly factor 6 homolog (COA6) of Homo sapiens (Human).